The primary structure comprises 101 residues: NAD(P)H-quinone oxidoreductase subunit 4L, chloroplastic (101 aa).

3 consecutive transmembrane segments (helical) span residues 2 to 22 (MFER…YGLI), 32 to 52 (ICLE…SDLF), and 61 to 81 (IFAI…LSIL).

The protein belongs to the complex I subunit 4L family. As to quaternary structure, NDH is composed of at least 16 different subunits, 5 of which are encoded in the nucleus.

The protein resides in the plastid. Its subcellular location is the chloroplast thylakoid membrane. The enzyme catalyses a plastoquinone + NADH + (n+1) H(+)(in) = a plastoquinol + NAD(+) + n H(+)(out). It carries out the reaction a plastoquinone + NADPH + (n+1) H(+)(in) = a plastoquinol + NADP(+) + n H(+)(out). NDH shuttles electrons from NAD(P)H:plastoquinone, via FMN and iron-sulfur (Fe-S) centers, to quinones in the photosynthetic chain and possibly in a chloroplast respiratory chain. The immediate electron acceptor for the enzyme in this species is believed to be plastoquinone. Couples the redox reaction to proton translocation, and thus conserves the redox energy in a proton gradient. This is NAD(P)H-quinone oxidoreductase subunit 4L, chloroplastic from Zea mays (Maize).